The chain runs to 484 residues: Glutamyl-tRNA(Gln) amidotransferase subunit B, mitochondrial (484 aa).

Belongs to the GatB/GatE family. GatB subfamily. In terms of assembly, subunit of the heterotrimeric GatFAB amidotransferase (AdT) complex, composed of A, B and F subunits.

Its subcellular location is the mitochondrion. The catalysed reaction is L-glutamyl-tRNA(Gln) + L-glutamine + ATP + H2O = L-glutaminyl-tRNA(Gln) + L-glutamate + ADP + phosphate + H(+). Functionally, allows the formation of correctly charged Gln-tRNA(Gln) through the transamidation of misacylated Glu-tRNA(Gln) in the mitochondria. The reaction takes place in the presence of glutamine and ATP through an activated gamma-phospho-Glu-tRNA(Gln). The polypeptide is Glutamyl-tRNA(Gln) amidotransferase subunit B, mitochondrial (Candida tropicalis (strain ATCC MYA-3404 / T1) (Yeast)).